The primary structure comprises 97 residues: Transcription and mRNA export factor SUS1 (97 aa).

Belongs to the ENY2 family. Component of the nuclear pore complex (NPC)-associated TREX-2 complex (transcription and export complex 2), composed of at least SUS1, SAC3, THP1, SEM1, and CDC31. TREX-2 contains 2 SUS1 chains. The TREX-2 complex interacts with the nucleoporin NUP1. Component of the 1.8 MDa SAGA transcription coactivator-HAT complex. SAGA is built of 5 distinct domains with specialized functions. Within the SAGA complex, SUS1, SGF11, SGF73 and UBP8 form an additional subcomplex of SAGA called the DUB module (deubiquitination module). Interacts directly with THP1, SAC3, SGF11, and with the RNA polymerase II.

The protein localises to the nucleus. The protein resides in the nucleoplasm. Its subcellular location is the cytoplasm. It localises to the P-body. In terms of biological role, involved in mRNA export coupled transcription activation by association with both the TREX-2 and the SAGA complexes. At the promoters, SAGA is required for recruitment of the basal transcription machinery. It influences RNA polymerase II transcriptional activity through different activities such as TBP interaction and promoter selectivity, interaction with transcription activators, and chromatin modification through histone acetylation and deubiquitination. Within the SAGA complex, participates in a subcomplex required for deubiquitination of H2B and for the maintenance of steady-state H3 methylation levels. The TREX-2 complex functions in docking export-competent ribonucleoprotein particles (mRNPs) to the nuclear entrance of the nuclear pore complex (nuclear basket). TREX-2 participates in mRNA export and accurate chromatin positioning in the nucleus by tethering genes to the nuclear periphery. May also be involved in cytoplasmic mRNA decay by interaction with components of P-bodies. The protein is Transcription and mRNA export factor SUS1 of Meyerozyma guilliermondii (strain ATCC 6260 / CBS 566 / DSM 6381 / JCM 1539 / NBRC 10279 / NRRL Y-324) (Yeast).